Here is a 558-residue protein sequence, read N- to C-terminus: Dihydroxy-acid dehydratase (558 aa).

Residue Cys50 participates in [2Fe-2S] cluster binding. Residue Asp82 coordinates Mg(2+). Cys123 is a [2Fe-2S] cluster binding site. Residues Asp124 and Lys125 each coordinate Mg(2+). Residue Lys125 is modified to N6-carboxylysine. Cys195 contacts [2Fe-2S] cluster. Position 447 (Glu447) interacts with Mg(2+). Ser472 acts as the Proton acceptor in catalysis.

The protein belongs to the IlvD/Edd family. As to quaternary structure, homodimer. Requires [2Fe-2S] cluster as cofactor. It depends on Mg(2+) as a cofactor.

It carries out the reaction (2R)-2,3-dihydroxy-3-methylbutanoate = 3-methyl-2-oxobutanoate + H2O. The catalysed reaction is (2R,3R)-2,3-dihydroxy-3-methylpentanoate = (S)-3-methyl-2-oxopentanoate + H2O. The protein operates within amino-acid biosynthesis; L-isoleucine biosynthesis; L-isoleucine from 2-oxobutanoate: step 3/4. It functions in the pathway amino-acid biosynthesis; L-valine biosynthesis; L-valine from pyruvate: step 3/4. Its function is as follows. Functions in the biosynthesis of branched-chain amino acids. Catalyzes the dehydration of (2R,3R)-2,3-dihydroxy-3-methylpentanoate (2,3-dihydroxy-3-methylvalerate) into 2-oxo-3-methylpentanoate (2-oxo-3-methylvalerate) and of (2R)-2,3-dihydroxy-3-methylbutanoate (2,3-dihydroxyisovalerate) into 2-oxo-3-methylbutanoate (2-oxoisovalerate), the penultimate precursor to L-isoleucine and L-valine, respectively. This Saccharolobus islandicus (strain L.S.2.15 / Lassen #1) (Sulfolobus islandicus) protein is Dihydroxy-acid dehydratase.